We begin with the raw amino-acid sequence, 409 residues long: Nucleoprotein (409 aa).

Disordered regions lie at residues 1-32 (MASGKATGKTDAPAPVIKLGGPKPPKVGSSGN), 46-69 (SPPLKFEGSGVPDNENLKTSQQHG), 120-193 (GADT…SGAE), and 238-259 (VDQVFGPRTKGKEGNFGDDKMN). The segment covering 15-31 (PVIKLGGPKPPKVGSSG) has biased composition (low complexity). An RNA-binding region spans residues 29 to 160 (SSGNASWFQA…GNFRWDFIPL (132 aa)). The 126-residue stretch at 31–156 (GNASWFQAIK…GGPDGNFRWD (126 aa)) folds into the CoV N NTD domain. Residues 162-179 (RGRSGKSTAASSAASSRA) show a composition bias toward low complexity. Composition is skewed to basic and acidic residues over residues 180-192 (PSREGSRGRRSGA) and 247-259 (KGKEGNFGDDKMN). Phosphoserine; by host is present on Ser-190. One can recognise a CoV N CTD domain in the interval 215 to 331 (TKAKADEMAH…QCVDGVGTRP (117 aa)). The dimerization stretch occupies residues 226 to 333 (RYCKRTIPPG…VDGVGTRPKD (108 aa)). The cysteines at positions 320 and 323 are disulfide-linked. Positions 327-409 (VGTRPKDDEP…GDSALGENEL (83 aa)) are disordered. Positions 341-354 (RSSSRPATRTSSPA) are enriched in low complexity. Positions 358–367 (PRPKKEKKTK) are enriched in basic residues. Positions 368–384 (KQDDEVDKALTSDEERN) are enriched in basic and acidic residues. Residue Thr-378 is modified to Phosphothreonine; by host. At Ser-379 the chain carries Phosphoserine; by host.

The protein belongs to the gammacoronavirus nucleocapsid protein family. Homooligomer. Both monomeric and oligomeric forms interact with RNA. Interacts with protein M. Interacts with NSP3; this interaction serves to tether the genome to the newly translated replicase-transcriptase complex at a very early stage of infection. Post-translationally, ADP-ribosylated. The ADP-ribosylation is retained in the virion during infection. Phosphorylated on serine and threonine residues.

The protein resides in the virion. It is found in the host endoplasmic reticulum-Golgi intermediate compartment. Its subcellular location is the host Golgi apparatus. In terms of biological role, packages the positive strand viral genome RNA into a helical ribonucleocapsid (RNP) and plays a fundamental role during virion assembly through its interactions with the viral genome and membrane protein M. Plays an important role in enhancing the efficiency of subgenomic viral RNA transcription as well as viral replication. In Gallus gallus (Chicken), this protein is Nucleoprotein.